Reading from the N-terminus, the 492-residue chain is NADH-quinone oxidoreductase subunit N (492 aa).

Helical transmembrane passes span 13–33, 43–63, 82–102, 110–132, 136–155, 169–189, 210–230, 245–265, 272–292, 306–326, 331–351, 377–397, 410–430, and 457–477; these read MLPVLLVLVGAIVSTLGGFWL, ILFVLASGASLVWLWGGAPWA, AALLLGGTVLLGALLTLLVSL, VSFAEFDALLMYAVTGCLLIAFS, IVMLIGLEIMSLASYVLATL, FLLGSVGSAILIYGLAFLYGA, IGILVTGTLLVLSGFGVKIAL, PTLVSLFLSTVVKVAAFAGML, LAAGPGWHSVLQILVALTLVI, LLAYSAVAHTGFLAMTLLGDT, AALGYYLLVYTLMTVGALAVV, AVALAFCLASLAGLPPFAGFF, GYLLISVLAVLSSVAALVYYL, and VAVALSLIGIVVLGLLPNLWY.

It belongs to the complex I subunit 2 family. In terms of assembly, NDH-1 is composed of 15 different subunits. Subunits NuoA, H, J, K, L, M, N constitute the membrane sector of the complex.

The protein resides in the cell membrane. It catalyses the reaction a quinone + NADH + 5 H(+)(in) = a quinol + NAD(+) + 4 H(+)(out). Functionally, NDH-1 shuttles electrons from NADH, via FMN and iron-sulfur (Fe-S) centers, to quinones in the respiratory chain. The immediate electron acceptor for the enzyme in this species is believed to be a menaquinone. Couples the redox reaction to proton translocation (for every two electrons transferred, four hydrogen ions are translocated across the cytoplasmic membrane), and thus conserves the redox energy in a proton gradient. The chain is NADH-quinone oxidoreductase subunit N from Deinococcus radiodurans (strain ATCC 13939 / DSM 20539 / JCM 16871 / CCUG 27074 / LMG 4051 / NBRC 15346 / NCIMB 9279 / VKM B-1422 / R1).